The chain runs to 57 residues: Large ribosomal subunit protein bL32A (57 aa).

It belongs to the bacterial ribosomal protein bL32 family.

The sequence is that of Large ribosomal subunit protein bL32A (rpmF1) from Streptomyces coelicolor (strain ATCC BAA-471 / A3(2) / M145).